A 305-amino-acid polypeptide reads, in one-letter code: Phosphoribosylaminoimidazole-succinocarboxamide synthase (305 aa).

It belongs to the SAICAR synthetase family.

The enzyme catalyses 5-amino-1-(5-phospho-D-ribosyl)imidazole-4-carboxylate + L-aspartate + ATP = (2S)-2-[5-amino-1-(5-phospho-beta-D-ribosyl)imidazole-4-carboxamido]succinate + ADP + phosphate + 2 H(+). The protein operates within purine metabolism; IMP biosynthesis via de novo pathway; 5-amino-1-(5-phospho-D-ribosyl)imidazole-4-carboxamide from 5-amino-1-(5-phospho-D-ribosyl)imidazole-4-carboxylate: step 1/2. The sequence is that of Phosphoribosylaminoimidazole-succinocarboxamide synthase from Polaromonas naphthalenivorans (strain CJ2).